The following is a 181-amino-acid chain: uncharacterized protein (181 aa).

Composition is skewed to gly residues over residues 143–156 and 170–181; these read RRGG…GPRG and GPFGPGYRGPRF. Positions 143–181 are disordered; the sequence is RRGGRYGDFGGPRGPRGPRNDGPFGPFGPFGPGYRGPRF.

In terms of assembly, has been detected in a cytochrome bc1-aa3 supercomplex; its deletion however leaves complex activity unaffected.

This is an uncharacterized protein from Corynebacterium glutamicum (strain ATCC 13032 / DSM 20300 / JCM 1318 / BCRC 11384 / CCUG 27702 / LMG 3730 / NBRC 12168 / NCIMB 10025 / NRRL B-2784 / 534).